The following is a 326-amino-acid chain: Serine hydrolase-like protein (326 aa).

Residues proline 44–phenylalanine 155 form the AB hydrolase-1 domain. Serine 118 is a catalytic residue.

This sequence belongs to the AB hydrolase superfamily.

Probable serine hydrolase. In Danio rerio (Zebrafish), this protein is Serine hydrolase-like protein (serhl).